We begin with the raw amino-acid sequence, 798 residues long: MASLSTPNINNTTFVNSKTQLPAVKVHLQKCYVGPWLNRGSKHMFTNYQFGHRQISKVAKYQASPDVVQVCDKVEHSTAQSFELVDKKIEDNIRYVKELLNSIDDGHISVSAYDTAWFALIRDLDGRDCPQFPSTIEWIADNQLADGSWGDEDFYSAYDRLINTLACVLALRTWNVHPEKSEKGISYIKENLHELEDAEAENMTCAFELLFPVLLKRAENLGINEIPYDAPIIKEIYNIRDTKLTRIPLEVLHERSTSILYGMEGLENLDLDWQKLMKLQTPEGSFLTSPAATAFAFMYTKDENCLKYIKYILDKFNGAAVDVYPVDLFARLWAVDRLQRLGISRFFESEIKDCLSYVHRFWTEKGIFSGRHALFHDLDDTSMGFRLLRQHGYDMDPNVFKHFQKDGRFHCLGGDMSDSLTVTYNLYRASQTQFPGEEILEEARNFCYNFLQDRAARNQLVDKWVISKHLADEMRTGLQLPWYASLPRVEARYYLQHYAGSGDVWLGKNFFRMEDISNDKYKEIAKLDFSRCQAQHQFEWTYMQGWYESSNVQEFGISRKDLLVAYFLAAATIFERERTKERIVWAKSHIVSRMIKSFFTNETTSLEEKVALLTGFEDNINGLHKITSAKREHEHVDILLATLHQLLGEFDEYASHQLKNAWRVWLTKLEQGEAGAEAELLVTTLNICAGHDIAFKEDILSQNEYKTLSNLTNKICQQLTQIQNKKVMETNDSNSIQDKEIEHDMQALVKSVLEEAVGIDRNIKQTFLSVAKTYYYGAYIAAETIDVHIFKVLFEPVI.

The transit peptide at 1–25 directs the protein to the chloroplast; sequence MASLSTPNINNTTFVNSKTQLPAVK. Residue Lys243 coordinates substrate. The Mg(2+) site is built by Asp377 and Asp379. The short motif at 377–380 is the DXDD motif element; the sequence is DLDD. A substrate-binding site is contributed by Lys463.

This sequence belongs to the terpene synthase family. Requires Mg(2+) as cofactor. In terms of tissue distribution, mostly expressed in trichomes of leaves and fruits.

It is found in the plastid. The protein resides in the chloroplast. The enzyme catalyses peregrinol diphosphate = (2E,6E,10E)-geranylgeranyl diphosphate + H2O. It participates in secondary metabolite biosynthesis; terpenoid biosynthesis. Its function is as follows. Involved in the biosynthesis of labdane-type diterpenoid including cleroda-dienols, and peregrinol lactones and furan derivatives, dopaminergic diterpenoids that can bind to dopamine receptors in the human pituitary gland, have probably ability to lower prolactin levels, and are used to treat menstrual cycle disorders (e.g. premenstrual syndrome and mastodynia). Terpene synthase that produces peregrinol diphosphate from geranylgeranyl diphosphate (GGPP). The chain is Peregrinol diphosphate synthase TPS1, chloroplastic from Vitex agnus-castus (Chaste tree).